Here is a 121-residue protein sequence, read N- to C-terminus: Small ribosomal subunit protein uS13 (121 aa).

The disordered stretch occupies residues 92-121 (RKGLPMRGQRTRTNARTRKGPRRAAQALKK).

This sequence belongs to the universal ribosomal protein uS13 family. Part of the 30S ribosomal subunit. Forms a loose heterodimer with protein S19. Forms two bridges to the 50S subunit in the 70S ribosome.

Functionally, located at the top of the head of the 30S subunit, it contacts several helices of the 16S rRNA. In the 70S ribosome it contacts the 23S rRNA (bridge B1a) and protein L5 of the 50S subunit (bridge B1b), connecting the 2 subunits; these bridges are implicated in subunit movement. Contacts the tRNAs in the A and P-sites. The sequence is that of Small ribosomal subunit protein uS13 from Burkholderia cenocepacia (strain HI2424).